Reading from the N-terminus, the 197-residue chain is Probable inosine/xanthosine triphosphatase (197 aa).

Thr-9 to Lys-14 serves as a coordination point for substrate. Mg(2+) is bound by residues Asp-36 and Asp-65.

The protein belongs to the YjjX NTPase family. As to quaternary structure, homodimer. Requires Mg(2+) as cofactor. Mn(2+) serves as cofactor.

The catalysed reaction is XTP + H2O = XDP + phosphate + H(+). It carries out the reaction ITP + H2O = IDP + phosphate + H(+). Its function is as follows. Phosphatase that hydrolyzes non-canonical purine nucleotides such as XTP and ITP to their respective diphosphate derivatives. Probably excludes non-canonical purines from DNA/RNA precursor pool, thus preventing their incorporation into DNA/RNA and avoiding chromosomal lesions. This chain is Probable inosine/xanthosine triphosphatase, found in Aeropyrum pernix (strain ATCC 700893 / DSM 11879 / JCM 9820 / NBRC 100138 / K1).